The sequence spans 416 residues: MSLSNKLSITDLALTGKRVLIRVDFNSPIQDGKITNPARINAALPTIKYALDNGASKVILMSHLGRPDGKAISKYSLKPVASELEKLLKKPVFFLHDCVGPDIEKAVLEAPEGAVVLLENLRFHIEEEGSAKNEEGKKIKADPSKVTQFREQLTRLGDVYVNDAFGTAHRAHSSMVGIKLPRRASGFLVKKELDYFAKALENPERPFLAILGGAKVSDKIQLIENMLDKVNCLVIGGGMAFTFKKTMQNVAIGNSLFDKPGSEKVAGIVEKAKKNNVEIVFPVDYVVGDKFDANANHKIVTDDEGVPDGWMGLDVGPKSNELFREAVLKAKTILWNGPPGVFEFPAFAKGSKVLLDATVEAVQKGATVIVGGGDTATVVANHDAEEKLSHVSTGGGASLELLEGKTLPGVAELSNK.

(2R)-3-phosphoglycerate contacts are provided by Val23, Asp24, Phe25, Asn26, Arg39, Ser62, His63, Gly65, Arg66, Leu121, Arg122, His169, and Arg170. Gly213 is an ADP binding site. Gly213 provides a ligand contact to CDP. AMP-binding residues include Ala214 and Lys215. Ala214 contacts ATP. Residue Ala214 participates in Mg(2+) binding. Asp218 lines the CDP pocket. Position 218 (Asp218) interacts with Mg(2+). Lys219 contributes to the AMP binding site. Residue Lys219 coordinates ATP. Gly237 is a binding site for ADP. CDP is bound at residue Gly237. Positions 238 and 312 each coordinate AMP. Residues Gly238 and Gly312 each contribute to the ATP site. Positions 337 and 342 each coordinate CDP. Phe342 provides a ligand contact to ADP. Position 343 (Glu343) interacts with AMP. Residues Glu343, Asp374, and Thr375 each contribute to the ATP site. Asp374 lines the Mg(2+) pocket.

Belongs to the phosphoglycerate kinase family. As to quaternary structure, monomer. It depends on Mg(2+) as a cofactor.

It is found in the cytoplasm. The protein resides in the mitochondrion. The catalysed reaction is (2R)-3-phosphoglycerate + ATP = (2R)-3-phospho-glyceroyl phosphate + ADP. It participates in carbohydrate degradation; glycolysis; pyruvate from D-glyceraldehyde 3-phosphate: step 2/5. Functionally, catalyzes one of the two ATP producing reactions in the glycolytic pathway via the reversible conversion of 1,3-diphosphoglycerate to 3-phosphoglycerate. Both L- and D- forms of purine and pyrimidine nucleotides can be used as substrates, but the activity is much lower on pyrimidines. Negatively regulates the biosynthesis of acetyl-CoA from pyruvate in the mitochondrion. The sequence is that of Phosphoglycerate kinase (pgkA) from Agaricus bisporus (White button mushroom).